The sequence spans 143 residues: Large ribosomal subunit protein uL11 (143 aa).

Belongs to the universal ribosomal protein uL11 family. In terms of assembly, part of the ribosomal stalk of the 50S ribosomal subunit. Interacts with L10 and the large rRNA to form the base of the stalk. L10 forms an elongated spine to which L12 dimers bind in a sequential fashion forming a multimeric L10(L12)X complex. Post-translationally, one or more lysine residues are methylated.

Forms part of the ribosomal stalk which helps the ribosome interact with GTP-bound translation factors. This chain is Large ribosomal subunit protein uL11, found in Paenarthrobacter aurescens (strain TC1).